Consider the following 355-residue polypeptide: Aromatic amino acid aminotransferase (355 aa).

K217 is modified (N6-(pyridoxal phosphate)lysine).

Belongs to the class-II pyridoxal-phosphate-dependent aminotransferase family. Homodimer. Pyridoxal 5'-phosphate serves as cofactor.

It carries out the reaction an aromatic L-alpha-amino acid + 2-oxoglutarate = an aromatic oxo-acid + L-glutamate. Aminotransferase that catalyzes the conversion of aromatic amino acids and 2-oxoglutarate into corresponding aromatic oxo acids and L-glutamate. The polypeptide is Aromatic amino acid aminotransferase (Mycolicibacterium paratuberculosis (strain ATCC BAA-968 / K-10) (Mycobacterium paratuberculosis)).